A 211-amino-acid polypeptide reads, in one-letter code: Octanoyltransferase (211 aa).

One can recognise a BPL/LPL catalytic domain in the interval 32-207; the sequence is PCTYDEIWFV…ELSKFLEIFI (176 aa). Residues 71 to 78, 138 to 140, and 151 to 153 contribute to the substrate site; these read RGGQITYH, SLG, and GLA. C169 (acyl-thioester intermediate) is an active-site residue.

The protein belongs to the LipB family.

The protein localises to the cytoplasm. It carries out the reaction octanoyl-[ACP] + L-lysyl-[protein] = N(6)-octanoyl-L-lysyl-[protein] + holo-[ACP] + H(+). The protein operates within protein modification; protein lipoylation via endogenous pathway; protein N(6)-(lipoyl)lysine from octanoyl-[acyl-carrier-protein]: step 1/2. Functionally, catalyzes the transfer of endogenously produced octanoic acid from octanoyl-acyl-carrier-protein onto the lipoyl domains of lipoate-dependent enzymes. Lipoyl-ACP can also act as a substrate although octanoyl-ACP is likely to be the physiological substrate. The protein is Octanoyltransferase of Buchnera aphidicola subsp. Acyrthosiphon pisum (strain APS) (Acyrthosiphon pisum symbiotic bacterium).